The chain runs to 242 residues: 2-amino-5-formylamino-6-ribosylaminopyrimidin-4(3H)-one 5'-monophosphate deformylase (242 aa).

Residues glutamate 46, histidine 48, aspartate 57, and histidine 125 each contribute to the Fe cation site.

This sequence belongs to the creatininase superfamily. FAPy deformylase family. Homodimer. The cofactor is Fe(2+). Requires Zn(2+) as cofactor.

The enzyme catalyses 2-amino-5-formylamino-6-(5-phospho-D-ribosylamino)pyrimidin-4(3H)-one + H2O = 2,5-diamino-6-(1-D-ribosylamino)pyrimidin-4(3H)-one 5'-phosphate + formate + H(+). Its pathway is cofactor biosynthesis; coenzyme F420 biosynthesis. The protein operates within cofactor biosynthesis; riboflavin biosynthesis. Catalyzes the hydrolysis of the formamide of 2-amino-5-formylamino-6-ribosylamino-4(3H)-pyrimidinone 5'-monophosphate (FAPy) to form 2,5-diamino-6-ribosylamino-4(3H)-pyrimidinone 5'-phosphate (APy). The sequence is that of 2-amino-5-formylamino-6-ribosylaminopyrimidin-4(3H)-one 5'-monophosphate deformylase from Methanococcus aeolicus (strain ATCC BAA-1280 / DSM 17508 / OCM 812 / Nankai-3).